Reading from the N-terminus, the 199-residue chain is Stress response protein SCP2 (199 aa).

Belongs to the CAPAB/TerDEXZ family.

The protein localises to the cytoplasm. The protein is Stress response protein SCP2 (yceC) of Bacillus subtilis (strain 168).